The sequence spans 86 residues: Allergen Api g 5 (86 aa).

Residue asparagine 62 is glycosylated (N-linked (GlcNAc...) asparagine).

It belongs to the oxygen-dependent FAD-linked oxidoreductase family. FAD serves as cofactor. Post-translationally, carries MUXF and MMXF, two complex N-linked glycans with alpha-1,3-fucose and beta-1,2-xylose residues in their structures. MMXF is added to Asn-62.

The chain is Allergen Api g 5 from Apium graveolens (Celery).